The following is a 437-amino-acid chain: ATP-dependent protease ATPase subunit HslU (437 aa).

Residues Val-18, 60–65 (GCGKTE), Asp-250, Glu-315, and Arg-387 contribute to the ATP site.

The protein belongs to the ClpX chaperone family. HslU subfamily. A double ring-shaped homohexamer of HslV is capped on each side by a ring-shaped HslU homohexamer. The assembly of the HslU/HslV complex is dependent on binding of ATP.

It localises to the cytoplasm. Its function is as follows. ATPase subunit of a proteasome-like degradation complex; this subunit has chaperone activity. The binding of ATP and its subsequent hydrolysis by HslU are essential for unfolding of protein substrates subsequently hydrolyzed by HslV. HslU recognizes the N-terminal part of its protein substrates and unfolds these before they are guided to HslV for hydrolysis. This Methylobacterium nodulans (strain LMG 21967 / CNCM I-2342 / ORS 2060) protein is ATP-dependent protease ATPase subunit HslU.